A 779-amino-acid chain; its full sequence is Pleckstrin homology domain-containing family A member 4 (779 aa).

The 100-residue stretch at 54–153 (PVHIRGWLHK…WLRALGRASR (100 aa)) folds into the PH domain. 3 disordered regions span residues 152–352 (SRAE…LPGP), 492–670 (AGLG…EGHR), and 691–764 (MTGG…LPQD). S164 is modified (phosphoserine). A compositionally biased stretch (basic and acidic residues) spans 184–193 (SRGEEGRISE). Over residues 315 to 332 (QHWSQEPRTQAHSGSPTY) the composition is skewed to polar residues. The span at 525-535 (PESLELSSPRS) shows a compositional bias: low complexity. Residues 536–551 (PETDWGRPPGGDKDLA) show a composition bias toward basic and acidic residues. S559 carries the post-translational modification Phosphoserine. The span at 594–603 (QLERMRRNQE) shows a compositional bias: basic and acidic residues. Polar residues predominate over residues 647 to 663 (LRSSGSWSSPRNTTPYL). Over residues 704 to 724 (PGVPLPPSDPTRQETPPPRSP) the composition is skewed to pro residues.

As to expression, highly expressed in melanoma. Detected at low levels in heart, skeletal muscle, kidney, liver and small intestine.

It localises to the cytoplasm. Its subcellular location is the membrane. Its function is as follows. Binds specifically to phosphatidylinositol 3-phosphate (PtdIns3P), but not to other phosphoinositides. In Homo sapiens (Human), this protein is Pleckstrin homology domain-containing family A member 4 (PLEKHA4).